A 310-amino-acid chain; its full sequence is Porphobilinogen deaminase (310 aa).

At C242 the chain carries S-(dipyrrolylmethanemethyl)cysteine.

Belongs to the HMBS family. As to quaternary structure, monomer. Dipyrromethane is required as a cofactor.

It carries out the reaction 4 porphobilinogen + H2O = hydroxymethylbilane + 4 NH4(+). It functions in the pathway porphyrin-containing compound metabolism; protoporphyrin-IX biosynthesis; coproporphyrinogen-III from 5-aminolevulinate: step 2/4. In terms of biological role, tetrapolymerization of the monopyrrole PBG into the hydroxymethylbilane pre-uroporphyrinogen in several discrete steps. The protein is Porphobilinogen deaminase of Shewanella sp. (strain ANA-3).